The sequence spans 943 residues: Neutral alpha-glucosidase AB (943 aa).

The signal sequence occupies residues methionine 1–serine 23. Positions phenylalanine 186–threonine 231 are disordered. A compositionally biased stretch (basic and acidic residues) spans proline 198–asparagine 211. The active-site Nucleophile is the aspartate 540. Residue glutamate 543 is part of the active site. Catalysis depends on aspartate 617, which acts as the Proton donor. Asparagine 878, asparagine 887, and asparagine 907 each carry an N-linked (GlcNAc...) asparagine glycan.

Belongs to the glycosyl hydrolase 31 family.

It is found in the endoplasmic reticulum. The protein localises to the golgi apparatus. The catalysed reaction is N(4)-(alpha-D-Glc-(1-&gt;3)-alpha-D-Man-(1-&gt;2)-alpha-D-Man-(1-&gt;2)-alpha-D-Man-(1-&gt;3)-[alpha-D-Man-(1-&gt;2)-alpha-D-Man-(1-&gt;3)-[alpha-D-Man-(1-&gt;2)-alpha-D-Man-(1-&gt;6)]-alpha-D-Man-(1-&gt;6)]-beta-D-Man-(1-&gt;4)-beta-D-GlcNAc-(1-&gt;4)-beta-D-GlcNAc)-L-asparaginyl-[protein] + H2O = N(4)-(alpha-D-Man-(1-&gt;2)-alpha-D-Man-(1-&gt;2)-alpha-D-Man-(1-&gt;3)-[alpha-D-Man-(1-&gt;2)-alpha-D-Man-(1-&gt;3)-[alpha-D-Man-(1-&gt;2)-alpha-D-Man-(1-&gt;6)]-alpha-D-Man-(1-&gt;6)]-beta-D-Man-(1-&gt;4)-beta-D-GlcNAc-(1-&gt;4)-beta-D-GlcNAc)-L-asparaginyl-[protein] (N-glucan mannose isomer 9A1,2,3B1,2,3) + beta-D-glucose. It carries out the reaction N(4)-(alpha-D-Glc-(1-&gt;3)-alpha-D-Glc-(1-&gt;3)-alpha-D-Man-(1-&gt;2)-alpha-D-Man-(1-&gt;2)-alpha-D-Man-(1-&gt;3)-[alpha-D-Man-(1-&gt;2)-alpha-D-Man-(1-&gt;3)-[alpha-D-Man-(1-&gt;2)-alpha-D-Man-(1-&gt;6)]-alpha-D-Man-(1-&gt;6)]-beta-D-Man-(1-&gt;4)-beta-D-GlcNAc-(1-&gt;4)-beta-D-GlcNAc)-L-asparaginyl-[protein] + H2O = N(4)-(alpha-D-Glc-(1-&gt;3)-alpha-D-Man-(1-&gt;2)-alpha-D-Man-(1-&gt;2)-alpha-D-Man-(1-&gt;3)-[alpha-D-Man-(1-&gt;2)-alpha-D-Man-(1-&gt;3)-[alpha-D-Man-(1-&gt;2)-alpha-D-Man-(1-&gt;6)]-alpha-D-Man-(1-&gt;6)]-beta-D-Man-(1-&gt;4)-beta-D-GlcNAc-(1-&gt;4)-beta-D-GlcNAc)-L-asparaginyl-[protein] + beta-D-glucose. It functions in the pathway glycan metabolism; N-glycan metabolism. Its function is as follows. Cleaves sequentially the 2 innermost alpha-1,3-linked glucose residues from N-linked oligosaccharides on newly synthesized glycoproteins. The sequence is that of Neutral alpha-glucosidase AB (modA) from Dictyostelium discoideum (Social amoeba).